The sequence spans 342 residues: tRNA(Ile)-lysidine synthase (342 aa).

31 to 36 contacts ATP; the sequence is SGGQDS.

It belongs to the tRNA(Ile)-lysidine synthase family.

The protein localises to the cytoplasm. The enzyme catalyses cytidine(34) in tRNA(Ile2) + L-lysine + ATP = lysidine(34) in tRNA(Ile2) + AMP + diphosphate + H(+). Functionally, ligates lysine onto the cytidine present at position 34 of the AUA codon-specific tRNA(Ile) that contains the anticodon CAU, in an ATP-dependent manner. Cytidine is converted to lysidine, thus changing the amino acid specificity of the tRNA from methionine to isoleucine. The polypeptide is tRNA(Ile)-lysidine synthase (Nostoc sp. (strain PCC 7120 / SAG 25.82 / UTEX 2576)).